Here is a 497-residue protein sequence, read N- to C-terminus: Probable malate:quinone oxidoreductase (497 aa).

Belongs to the MQO family. FAD is required as a cofactor.

The enzyme catalyses (S)-malate + a quinone = a quinol + oxaloacetate. Its pathway is carbohydrate metabolism; tricarboxylic acid cycle; oxaloacetate from (S)-malate (quinone route): step 1/1. The protein is Probable malate:quinone oxidoreductase of Prochlorococcus marinus (strain MIT 9515).